Reading from the N-terminus, the 478-residue chain is Secretogranin-3 (478 aa).

An N-terminal signal peptide occupies residues 1-21 (MASKRLGFVVVLALVCQHINA). 2 disordered regions span residues 22-126 (FPTP…NGMD) and 208-287 (IGDR…EDGL). The segment covering 28–42 (PDDKYNRELTEEKPL) has biased composition (basic and acidic residues). Acidic residues predominate over residues 63–74 (AEEETNSEDDDI). The segment covering 97–120 (ANERLGADDTDSTKNRRLADDYDS) has biased composition (basic and acidic residues). Residues 235–259 (DEEDEVENEGGDDANGDEPQEEESR) show a composition bias toward acidic residues.

Its subcellular location is the cytoplasmic vesicle. The protein localises to the secretory vesicle lumen. The protein resides in the secretory vesicle membrane. It is found in the secreted. This Danio rerio (Zebrafish) protein is Secretogranin-3 (scg3).